We begin with the raw amino-acid sequence, 680 residues long: Calcium-binding and coiled-coil domain-containing protein 1 (680 aa).

The p300 KIX-binding stretch occupies residues 1 to 30 (MEESSLSRAPSRGGVNFLNVARTYIPNTKV). Positions 1–190 (MEESSLSRAP…VQELEKALAA (190 aa)) are N-terminal AD (CTNNB1 binding site). A Phosphoserine modification is found at S4. An interaction with GATA1 region spans residues 45–125 (SDWIGIFKVE…FQFREPRPMD (81 aa)). Coiled coils occupy residues 145–205 (KATV…YKGL), 232–339 (ELEE…AELE), and 417–514 (QSVE…ADEK). Positions 501-680 (RKLEARLEKV…HTYTHTHTHA (180 aa)) are C-terminal AD (CTNNB1 binding site); interaction with CCAR1. A disordered region spans residues 511-606 (ADEKWSEDPA…DSEAEDEKSV (96 aa)). Residues 654-679 (WKECPICKERFPVHTQTHTYTHTHTH) form a UBZ1-type zinc finger. Residues C657, C660, H675, and H679 each coordinate Zn(2+).

Belongs to the CALCOCO family. Part of a calphoglin complex consisting of CALCOCO1, PPA1 and PGM. Interacts with the bHLH-PAS domains of GRIP1, AHR and ARNT. Interacts with CTNNB1 via both its N- and C-terminal regions. Interacts with EP300. Interacts with CCAR1 (via N-terminus) and GATA1.

The protein localises to the cytoplasm. Its subcellular location is the nucleus. Its function is as follows. Functions as a coactivator for aryl hydrocarbon and nuclear receptors (NR). Recruited to promoters through its contact with the N-terminal basic helix-loop-helix-Per-Arnt-Sim (PAS) domain of transcription factors or coactivators, such as NCOA2. During ER-activation acts synergistically in combination with other NCOA2-binding proteins, such as EP300, CREBBP and CARM1. Involved in the transcriptional activation of target genes in the Wnt/CTNNB1 pathway. Functions as a secondary coactivator in LEF1-mediated transcriptional activation via its interaction with CTNNB1. Coactivator function for nuclear receptors and LEF1/CTNNB1 involves differential utilization of two different activation regions. In association with CCAR1 enhances GATA1- and MED1-mediated transcriptional activation from the gamma-globin promoter during erythroid differentiation of K562 erythroleukemia cells. Functionally, seems to enhance inorganic pyrophosphatase thus activating phosphogluomutase (PMG). Probably functions as a component of the calphoglin complex, which is involved in linking cellular metabolism (phosphate and glucose metabolism) with other core functions including protein synthesis and degradation, calcium signaling and cell growth. This Bos taurus (Bovine) protein is Calcium-binding and coiled-coil domain-containing protein 1 (CALCOCO1).